A 193-amino-acid polypeptide reads, in one-letter code: Protein hunchback (193 aa).

Basic residues predominate over residues 18–31; it reads HLHHHHAHHSHHRH. Disordered regions lie at residues 18–57 and 153–193; these read HLHHHHAHHSHHRHDSNSNSNASSPHQSPLPSPNPPSNTN and LTPP…KYMA. Residues 34 to 44 show a composition bias toward low complexity; sequence NSNSNASSPHQ. A compositionally biased stretch (basic and acidic residues) spans 174–193; that stretch reads EPEKEHDLMSNSSEDMKYMA.

This sequence belongs to the hunchback C2H2-type zinc-finger protein family.

Its subcellular location is the nucleus. Functionally, gap class segmentation protein that controls development of head structures. In Drosophila petalopeza (Fruit fly), this protein is Protein hunchback (hb).